We begin with the raw amino-acid sequence, 200 residues long: MLKYPDYISKLISFLKKLPGIGFKSAEKIAFELLEWDPSQIEAMALALQEFSTSHATCSNCFCLKISQTSPCNFCSESRDSSSLCIVATPKDVFALEKSKIFKGHYFVLGNLLSPITGKHLSLEKLAILKQRIEACSPKEMIIALDATLEGDATALFLKQEFSYLPIKISRLALGMPVGLSFDFVDANTLARAFSGRNCF.

The segment at 58–75 adopts a C4-type zinc-finger fold; the sequence is CSNCFCLKISQTSPCNFC. The region spanning 82–177 is the Toprim domain; sequence SSLCIVATPK…KISRLALGMP (96 aa).

It belongs to the RecR family.

Its function is as follows. May play a role in DNA repair. It seems to be involved in an RecBC-independent recombinational process of DNA repair. It may act with RecF and RecO. The polypeptide is Recombination protein RecR (Chlamydia trachomatis serovar L2 (strain ATCC VR-902B / DSM 19102 / 434/Bu)).